Consider the following 374-residue polypeptide: 2-oxoglutarate-Fe(II) type oxidoreductase ppzC (374 aa).

Residues 111 to 130 form a disordered region; it reads KDGPFDSGYRGPGTQRVNPT. The Fe2OG dioxygenase domain occupies 220–330; it reads YPDASLEINF…RVSMPFFWGF (111 aa). Fe cation-binding residues include His254, Asp256, and His311. A 2-oxoglutarate-binding site is contributed by Arg321.

Belongs to the iron/ascorbate-dependent oxidoreductase family. It depends on Fe(2+) as a cofactor.

It catalyses the reaction peramine + 2-oxoglutarate + O2 = 8-hydroxyperamine + succinate + CO2. The protein operates within secondary metabolite biosynthesis. Functionally, 2-oxoglutarate-Fe(II) type oxidoreductase; part of the gene cluster that mediates the biosynthesis of pyrrolopyrazines, secondary metabolites showing insecticidal activity. Within the pathway, ppzC uses peramine as substrate for hydroxylation to yield the novel analog 8-hydroxyperamine. The single multifunctional NRPS ppzA is sufficient to produce peramine via condensation of 1-pyrroline-5-carboxylate and arginine, N-methylation of the alpha-amino group of arginine and reduction of the thioester and the cyclization to form an iminium ion resulting in release from the peptide synthetase. Deprotonation of this intermediate and oxidation of the pyrroline ring would give rise to peramine. In Epichloe species that produce only peramine, the peramine synthetase gene is not localized in a gene cluster, in contrast to Metarhizium species that contain additional pyrrolopyrazine biosynthesis genes. The 2-oxoglutarate-Fe(II) type oxidoreductase ppzC hydroxylates peramine to yield the newly identified compound 8-hydroxyperamine whereas ppzD converts L-proline into trans-4-hydroxy-L-proline, a precursor of peramine biosynthesis. The polypeptide is 2-oxoglutarate-Fe(II) type oxidoreductase ppzC (Metarhizium rileyi (strain RCEF 4871) (Nomuraea rileyi)).